We begin with the raw amino-acid sequence, 423 residues long: Histidine--tRNA ligase (423 aa).

This sequence belongs to the class-II aminoacyl-tRNA synthetase family. Homodimer.

Its subcellular location is the cytoplasm. The catalysed reaction is tRNA(His) + L-histidine + ATP = L-histidyl-tRNA(His) + AMP + diphosphate + H(+). In Pasteurella multocida (strain Pm70), this protein is Histidine--tRNA ligase (hisS).